An 890-amino-acid polypeptide reads, in one-letter code: Receptor like protein 23 (890 aa).

The signal sequence occupies residues 1-22; that stretch reads MSKALLHLHFLSLFLLCCVCHS. Residues 23–850 lie on the Extracellular side of the membrane; sequence SIFTLNFHFT…EEEEEVLNGR (828 aa). Residues asparagine 58, asparagine 70, asparagine 91, asparagine 109, and asparagine 145 are each glycosylated (N-linked (GlcNAc...) asparagine). 27 LRR repeats span residues 97-121, 123-145, 146-171, 173-195, 196-218, 220-243, 244-268, 270-290, 291-316, 318-339, 340-363, 364-389, 391-411, 412-436, 438-461, 462-485, 487-506, 507-527, 528-551, 553-575, 577-598, 599-623, 626-650, 699-724, 726-747, 748-771, and 773-796; these read FHQL…GFGN, KRLE…SFSN, LTML…GLRK, IVLD…LFEL, HQLR…KFGN, HRLE…ISNL, TRLT…NLTN, YELD…LLTL, PFLA…STSS, LEIM…ISKL, INLK…LFSS, LKSL…SYIP, TLEM…ILKT, LKEL…LWSL, LLQS…ILVN, SSVL…PLSI, GFGV…ICNR, SSLA…PPCL, RNLE…LCDG, SLRT…FVNC, SLKF…WLKA, LPNL…HQGP, FPEL…YFVN, LTSY…GLLK, LIAV…MANL, ENLE…LGSI, and FLAY…QITG. 4 N-linked (GlcNAc...) asparagine glycosylation sites follow: asparagine 189, asparagine 207, asparagine 242, and asparagine 265. The N-linked (GlcNAc...) asparagine glycan is linked to asparagine 311. N-linked (GlcNAc...) asparagine glycosylation occurs at asparagine 351. Asparagine 461 carries N-linked (GlcNAc...) asparagine glycosylation. 2 N-linked (GlcNAc...) asparagine glycosylation sites follow: asparagine 505 and asparagine 518. Asparagine 574 is a glycosylation site (N-linked (GlcNAc...) asparagine). A glycan (N-linked (GlcNAc...) asparagine) is linked at asparagine 730. N-linked (GlcNAc...) asparagine glycosylation is present at asparagine 778. A helical membrane pass occupies residues 851–871; sequence AVAIGYGSGLLLGLAIAQVIA. Residues 872–890 lie on the Cytoplasmic side of the membrane; it reads SYKPEWLVKIIGLNKRRKR.

It belongs to the RLP family. As to quaternary structure, directly interacts with a 20-mer fragment (nlp20) from NLPs through its extracellular LRR domain. Component of a trimeric complex composed of RLP23, SOBIR1 and BAK1. BAK1 is recruited into a pre-formed RLP23-SOBIR1 complex in a ligand-dependent manner. Interacts with SOBIR1.

The protein resides in the cell membrane. Its function is as follows. Involved in the perception of necrosis and ethylene-inducing peptide 1-like proteins (NLPs), that act as extracellular signals mediating immune activation. Component of the RLP23-SOBIR1-BAK1 complex that mediates NLP-triggered immunity. This chain is Receptor like protein 23, found in Arabidopsis thaliana (Mouse-ear cress).